A 179-amino-acid chain; its full sequence is ATP synthase subunit delta (179 aa).

This sequence belongs to the ATPase delta chain family. As to quaternary structure, F-type ATPases have 2 components, F(1) - the catalytic core - and F(0) - the membrane proton channel. F(1) has five subunits: alpha(3), beta(3), gamma(1), delta(1), epsilon(1). F(0) has three main subunits: a(1), b(2) and c(10-14). The alpha and beta chains form an alternating ring which encloses part of the gamma chain. F(1) is attached to F(0) by a central stalk formed by the gamma and epsilon chains, while a peripheral stalk is formed by the delta and b chains.

It is found in the cell inner membrane. F(1)F(0) ATP synthase produces ATP from ADP in the presence of a proton or sodium gradient. F-type ATPases consist of two structural domains, F(1) containing the extramembraneous catalytic core and F(0) containing the membrane proton channel, linked together by a central stalk and a peripheral stalk. During catalysis, ATP synthesis in the catalytic domain of F(1) is coupled via a rotary mechanism of the central stalk subunits to proton translocation. Functionally, this protein is part of the stalk that links CF(0) to CF(1). It either transmits conformational changes from CF(0) to CF(1) or is implicated in proton conduction. This chain is ATP synthase subunit delta, found in Cupriavidus pinatubonensis (strain JMP 134 / LMG 1197) (Cupriavidus necator (strain JMP 134)).